A 404-amino-acid chain; its full sequence is Coenzyme F420H(2) oxidase (404 aa).

Residues H84, E86, D88, H89, H152, D170, and H233 each coordinate Fe cation. The region spanning 259 to 399 is the Flavodoxin-like domain; it reads VTVIYDTMHH…ACFEAGRRLA (141 aa). FMN-binding positions include 265 to 270, 317 to 320, and 351 to 356; these read TMHHST, AIYD, and SMGGRG.

The protein in the N-terminal section; belongs to the zinc metallo-hydrolase group 3 family. The cofactor is FMN. It depends on Fe cation as a cofactor.

It carries out the reaction 2 reduced coenzyme F420-(gamma-L-Glu)(n) + O2 = 2 oxidized coenzyme F420-(gamma-L-Glu)(n) + 2 H2O + 2 H(+). Its function is as follows. Catalyzes the oxidation of F420H(2) with O(2). May be involved in O(2) detoxification, reducing the intracellular O(2) concentration to a level allowing growth at the expense of methane formation. This chain is Coenzyme F420H(2) oxidase, found in Methanothermobacter thermautotrophicus (strain ATCC 29096 / DSM 1053 / JCM 10044 / NBRC 100330 / Delta H) (Methanobacterium thermoautotrophicum).